The primary structure comprises 469 residues: Properdin (469 aa).

The first 27 residues, 1 to 27 (MITEGAQAPRLLLPPLLLLLTLPATGS), serve as a signal peptide directing secretion. 7 consecutive TSP type-1 domains span residues 28 to 76 (DPVL…QPCR), 77 to 134 (SPRW…QCCP), 136 to 191 (MGGW…QVCP), 193 to 255 (HGAW…PPCP), 257 to 313 (AGGW…VPCP), 315 to 377 (DGEW…QHCP), and 379 to 462 (KGSW…PACK). Disulfide bonds link cysteine 32–cysteine 56, cysteine 43–cysteine 72, and cysteine 57–cysteine 75. Residues tryptophan 83 and tryptophan 86 are each glycosylated (C-linked (Man) tryptophan). Intrachain disulfides connect cysteine 89-cysteine 127, cysteine 93-cysteine 133, cysteine 104-cysteine 111, cysteine 132-cysteine 170, cysteine 148-cysteine 184, cysteine 152-cysteine 190, and cysteine 163-cysteine 174. O-linked (Fuc...) threonine glycosylation is present at threonine 92. Tryptophan 139, tryptophan 142, and tryptophan 145 each carry a C-linked (Man) tryptophan glycan. Threonine 151 is a glycosylation site (O-linked (Fuc...) threonine). C-linked (Man) tryptophan glycosylation is found at tryptophan 196, tryptophan 199, and tryptophan 202. Disulfide bonds link cysteine 205–cysteine 248, cysteine 209–cysteine 254, and cysteine 224–cysteine 238. An O-linked (Fuc...) serine glycan is attached at serine 208. The tract at residues 219 to 238 (TRSRKCSAPEPSQKPPGKPC) is disordered. C-linked (Man) tryptophan glycosylation is found at tryptophan 260 and tryptophan 263. Intrachain disulfides connect cysteine 269-cysteine 306, cysteine 273-cysteine 312, and cysteine 284-cysteine 296. Threonine 272 is a glycosylation site (O-linked (Fuc...) threonine). Residues tryptophan 321 and tryptophan 324 are each glycosylated (C-linked (Man) tryptophan). Cystine bridges form between cysteine 327–cysteine 370, cysteine 337–cysteine 376, and cysteine 350–cysteine 360. Residues 351-359 (RGRKFDGHR) are interaction with Complement C3 beta chain. 3 C-linked (Man) tryptophan glycosylation sites follow: tryptophan 382, tryptophan 385, and tryptophan 388. 3 cysteine pairs are disulfide-bonded: cysteine 391-cysteine 455, cysteine 395-cysteine 461, and cysteine 407-cysteine 439. N-linked (GlcNAc...) (complex) asparagine glycosylation occurs at asparagine 428.

In plasma, properdin exists as dimers, trimers or tetramers in the relative proportions of 26:54:20. Interacts with the pro-C3-convertase enzyme complex (C3b-Bb) comprised of Complement C3 beta chain (C3b) and the Complement factor B Bb fragment (Bb), where it binds (via its TSP type-1 5 domain) with C3b and Bb. This interaction stabilizes the complex and allows it to become the active C3-convertase enzyme complex (C3b-Bb-FP). Interacts with C3b. Interacts with CFB.

The protein resides in the secreted. In terms of biological role, a positive regulator of the alternate pathway (AP) of complement. It binds to and stabilizes the C3- and C5-convertase enzyme complexes. Inhibits CFI-CFH mediated degradation of Complement C3 beta chain (C3b). This Homo sapiens (Human) protein is Properdin.